A 178-amino-acid chain; its full sequence is MLKIRLARGGAKKRPYYSIVIADSHSPRDGRFIEKVGSYNPLLKKDDPNRIVVKQERIQEWLGKGAQPTDRVARELSKLGITQWTAGNNPKKGEPGQKAKERAEERAQREADRAAAAAEAAAAPAEEAPAEEAPAEEAAAEAAPEAAAAEEAPAAEAAAEEAAPAAEEAAPAEGEEQA.

Residues 78 to 178 (KLGITQWTAG…AAPAEGEEQA (101 aa)) are disordered. Over residues 91-113 (KKGEPGQKAKERAEERAQREADR) the composition is skewed to basic and acidic residues. Low complexity predominate over residues 114-127 (AAAAAEAAAAPAEE). The segment covering 128-139 (APAEEAPAEEAA) has biased composition (acidic residues). Low complexity predominate over residues 140 to 172 (AEAAPEAAAAEEAPAAEAAAEEAAPAAEEAAPA).

This sequence belongs to the bacterial ribosomal protein bS16 family.

This is Small ribosomal subunit protein bS16 from Phenylobacterium zucineum (strain HLK1).